A 120-amino-acid chain; its full sequence is Large ribosomal subunit protein bL20 (120 aa).

The protein belongs to the bacterial ribosomal protein bL20 family.

Functionally, binds directly to 23S ribosomal RNA and is necessary for the in vitro assembly process of the 50S ribosomal subunit. It is not involved in the protein synthesizing functions of that subunit. The protein is Large ribosomal subunit protein bL20 of Mesoplasma florum (strain ATCC 33453 / NBRC 100688 / NCTC 11704 / L1) (Acholeplasma florum).